A 111-amino-acid chain; its full sequence is Universal stress protein B (111 aa).

2 consecutive transmembrane segments (helical) span residues 1–21 (MIST…NMAR) and 90–110 (FILT…LMLW).

This sequence belongs to the universal stress protein B family.

It localises to the cell inner membrane. The chain is Universal stress protein B from Yersinia pseudotuberculosis serotype O:1b (strain IP 31758).